The following is a 541-amino-acid chain: MGHSPPVLPLCASVSLLGGLTFGYELAVISGALLPLQLDFGLSCLEQEFLVGSLLLGALLASLVGGFLIDCYGRKQAILGSNLVLLAGSLTLGLAGSLAWLVLGRAVVGFAISLSSMACCIYVSELVGPRQRGVLVSLYEAGITVGILLSYALNYALAGTPWGWRHMFGWATAPAVLQSLSLLFLPAGTDETATHKDLIPLQGGEAPKLGPGRPRYSFLDLFRARDNMRGRTTVGLGLVLFQQLTGQPNVLCYASTIFSSVGFHGGSSAVLASVGLGAVKVAATLTAMGLVDRAGRRALLLAGCALMALSVSGIGLVSFAVPMDSGPSCLAVPNATGQTGLPGDSGLLQDSSLPPIPRTNEDQREPILSTAKKTKPHPRSGDPSAPPRLALSSALPGPPLPARGHALLRWTALLCLMVFVSAFSFGFGPVTWLVLSEIYPVEIRGRAFAFCNSFNWAANLFISLSFLDLIGTIGLSWTFLLYGLTAVLGLGFIYLFVPETKGQSLAEIDQQFQKRRFTLSFGHRQNSTGIPYSRIEISAAS.

The Cytoplasmic segment spans residues 1-15 (MGHSPPVLPLCASVS). A helical membrane pass occupies residues 16-36 (LLGGLTFGYELAVISGALLPL). Residues 37-48 (QLDFGLSCLEQE) lie on the Extracellular side of the membrane. The helical transmembrane segment at 49–69 (FLVGSLLLGALLASLVGGFLI) threads the bilayer. Residues 70–77 (DCYGRKQA) are Cytoplasmic-facing. Residues 78-98 (ILGSNLVLLAGSLTLGLAGSL) form a helical membrane-spanning segment. Over 99–106 (AWLVLGRA) the chain is Extracellular. The helical transmembrane segment at 107–127 (VVGFAISLSSMACCIYVSELV) threads the bilayer. Residues 128–134 (GPRQRGV) lie on the Cytoplasmic side of the membrane. The chain crosses the membrane as a helical span at residues 135–155 (LVSLYEAGITVGILLSYALNY). The Extracellular portion of the chain corresponds to 156–166 (ALAGTPWGWRH). Residues 167–187 (MFGWATAPAVLQSLSLLFLPA) form a helical membrane-spanning segment. At 188–233 (GTDETATHKDLIPLQGGEAPKLGPGRPRYSFLDLFRARDNMRGRTT) the chain is on the cytoplasmic side. A helical transmembrane segment spans residues 234 to 254 (VGLGLVLFQQLTGQPNVLCYA). Residue 242–243 (QQ) coordinates D-glucose. Topologically, residues 255 to 269 (STIFSSVGFHGGSSA) are extracellular. A helical transmembrane segment spans residues 270–290 (VLASVGLGAVKVAATLTAMGL). At 291–298 (VDRAGRRA) the chain is on the cytoplasmic side. A helical membrane pass occupies residues 299–319 (LLLAGCALMALSVSGIGLVSF). Residues 320–414 (AVPMDSGPSC…HALLRWTALL (95 aa)) are Extracellular-facing. N-linked (GlcNAc...) asparagine glycosylation occurs at Asn-334. A disordered region spans residues 340–388 (GLPGDSGLLQDSSLPPIPRTNEDQREPILSTAKKTKPHPRSGDPSAPPR). A helical membrane pass occupies residues 415 to 435 (CLMVFVSAFSFGFGPVTWLVL). Trp-432 contributes to the D-glucose binding site. Residues 436-445 (SEIYPVEIRG) lie on the Cytoplasmic side of the membrane. A helical membrane pass occupies residues 446-466 (RAFAFCNSFNWAANLFISLSF). At 467 to 476 (LDLIGTIGLS) the chain is on the extracellular side. A helical transmembrane segment spans residues 477–497 (WTFLLYGLTAVLGLGFIYLFV). At 498 to 541 (PETKGQSLAEIDQQFQKRRFTLSFGHRQNSTGIPYSRIEISAAS) the chain is on the cytoplasmic side.

Belongs to the major facilitator superfamily. Sugar transporter (TC 2.A.1.1) family. Glucose transporter subfamily. Widely expressed; highest levels in liver and pancreas.

It localises to the endomembrane system. Its subcellular location is the cytoplasm. The protein resides in the perinuclear region. It catalyses the reaction D-glucose(out) = D-glucose(in). Facilitative glucose transporter required for the development of the cardiovascular system. In Homo sapiens (Human), this protein is Solute carrier family 2, facilitated glucose transporter member 10.